A 352-amino-acid polypeptide reads, in one-letter code: Rhodopsin (352 aa).

Topologically, residues 1-36 (MNGTEGPYFYVPMSNATGVVRSPYEYPQYYLAPPWA) are extracellular. N-linked (GlcNAc...) asparagine glycosylation is found at asparagine 2 and asparagine 15. Residues 37–61 (YACLAAYMFFLILVGFPVNFLTLYV) traverse the membrane as a helical segment. The Cytoplasmic segment spans residues 62–73 (TIEHKKLRTPLN). A helical membrane pass occupies residues 74–96 (YILLNLAVADLFMVFGGFTTTMY). The Extracellular segment spans residues 97–110 (TSLNGYFVFGRLGC). Cysteine 110 and cysteine 187 are oxidised to a cystine. The chain crosses the membrane as a helical span at residues 111–133 (NLEGFFATFGGINSLWCLVVLSI). Positions 134-136 (ERW) match the 'Ionic lock' involved in activated form stabilization motif. The Cytoplasmic segment spans residues 134–152 (ERWVVVCKPMSNFRFGENH). Residues 153–173 (AIMGVAFTWFMALACTVPPLV) traverse the membrane as a helical segment. Over 174 to 202 (GWSRYIPEGMQCSCGIDYYTRAEGFNNES) the chain is Extracellular. Residues 203-224 (FVIYMFVVHFLTPLFVITFCYG) form a helical membrane-spanning segment. Topologically, residues 225 to 252 (RLVCTVKEAAAQQQESETTQRAEREVTR) are cytoplasmic. The chain crosses the membrane as a helical span at residues 253 to 274 (MVILMFIAYLVCWLPYASVSWW). The Extracellular portion of the chain corresponds to 275 to 286 (IFTNQGSEFGPI). The helical transmembrane segment at 287-308 (FMTVPAFFAKSSSIYNPVIYIC) threads the bilayer. At lysine 296 the chain carries N6-(retinylidene)lysine. Over 309–352 (LNKQFRHCMITTLCCGKNPFEEEEGASTTASKTEASSVSSVSPA) the chain is Cytoplasmic. 2 S-palmitoyl cysteine lipidation sites follow: cysteine 322 and cysteine 323. The segment at 331–352 (EEGASTTASKTEASSVSSVSPA) is disordered. Over residues 334 to 352 (ASTTASKTEASSVSSVSPA) the composition is skewed to low complexity.

The protein belongs to the G-protein coupled receptor 1 family. Opsin subfamily. In terms of processing, phosphorylated on some or all of the serine and threonine residues present in the C-terminal region. Post-translationally, contains one covalently linked retinal chromophore.

It localises to the membrane. Its subcellular location is the cell projection. The protein localises to the cilium. It is found in the photoreceptor outer segment. Photoreceptor required for image-forming vision at low light intensity. While most salt water fish species use retinal as chromophore, most freshwater fish use 3-dehydroretinal, or a mixture of retinal and 3-dehydroretinal. Light-induced isomerization of 11-cis to all-trans retinal triggers a conformational change that activates signaling via G-proteins. Subsequent receptor phosphorylation mediates displacement of the bound G-protein alpha subunit by arrestin and terminates signaling. The polypeptide is Rhodopsin (rho) (Psalidodon fasciatus (Banded astyanax)).